Consider the following 91-residue polypeptide: UPF0223 protein SAR1071 (91 aa).

The protein belongs to the UPF0223 family.

This is UPF0223 protein SAR1071 from Staphylococcus aureus (strain MRSA252).